Consider the following 890-residue polypeptide: Kinesin-like protein KIN-7C, mitochondrial (890 aa).

The segment covering 1-13 (MSATRSQRSSTIS) has biased composition (polar residues). Residues 1-66 (MSATRSQRSS…TSSAAASSTA (66 aa)) are disordered. The transit peptide at 1–73 (MSATRSQRSS…STAVASTKLK (73 aa)) directs the protein to the mitochondrion. Positions 40–66 (SPVTSSSPLLRSSPSPSTSSAAASSTA) are enriched in low complexity. A Kinesin motor domain is found at 75–394 (NITVTIRFRP…LKFAQRCKHV (320 aa)). 155 to 162 (GVTSSGKT) provides a ligand contact to ATP. Residues 395-468 (EIKASRNKIM…MGRIQRLTKL (74 aa)) adopt a coiled-coil conformation. Residues 511 to 595 (DGAVSTVSEH…TTRRENAAAI (85 aa)) are disordered. Low complexity predominate over residues 569–579 (SQASGSPSSSS). Coiled coils occupy residues 664 to 693 (HIRD…IIEI) and 729 to 765 (ADNR…LAER). Residues 768–797 (TQQIAGDESSGKNIHNRNGEESEIYSGAGT) form a disordered region. Residues 818-884 (NETALNSQAL…AEEVTRLCNE (67 aa)) adopt a coiled-coil conformation.

It belongs to the TRAFAC class myosin-kinesin ATPase superfamily. Kinesin family. KIN-7 subfamily.

The protein localises to the mitochondrion. This Arabidopsis thaliana (Mouse-ear cress) protein is Kinesin-like protein KIN-7C, mitochondrial.